The chain runs to 208 residues: Imidazole glycerol phosphate synthase subunit HisH (208 aa).

One can recognise a Glutamine amidotransferase type-1 domain in the interval 1–206 (MIVIVDYDTG…KEMTEDEALS (206 aa)). The Nucleophile role is filled by Cys79. Residues His181 and Glu183 contribute to the active site.

Heterodimer of HisH and HisF.

It is found in the cytoplasm. The catalysed reaction is 5-[(5-phospho-1-deoxy-D-ribulos-1-ylimino)methylamino]-1-(5-phospho-beta-D-ribosyl)imidazole-4-carboxamide + L-glutamine = D-erythro-1-(imidazol-4-yl)glycerol 3-phosphate + 5-amino-1-(5-phospho-beta-D-ribosyl)imidazole-4-carboxamide + L-glutamate + H(+). It carries out the reaction L-glutamine + H2O = L-glutamate + NH4(+). It participates in amino-acid biosynthesis; L-histidine biosynthesis; L-histidine from 5-phospho-alpha-D-ribose 1-diphosphate: step 5/9. IGPS catalyzes the conversion of PRFAR and glutamine to IGP, AICAR and glutamate. The HisH subunit catalyzes the hydrolysis of glutamine to glutamate and ammonia as part of the synthesis of IGP and AICAR. The resulting ammonia molecule is channeled to the active site of HisF. This Lacticaseibacillus casei (strain BL23) (Lactobacillus casei) protein is Imidazole glycerol phosphate synthase subunit HisH.